The sequence spans 148 residues: MKRVLIIHGPNVNLTGKREKEVYGDINYEEINNLIKREAAKLDIAVKIQQSNSEGEIINLIHSAENNFDAIIINPAAYTHYSLAIMDAIAAVSVPVIEVHISNIFGREDYRKTSVTASKCKGVITGFGPYSYVLALNAVKLLEDSIGG.

Y23 functions as the Proton acceptor in the catalytic mechanism. Substrate is bound by residues N74, H80, and D87. H100 serves as the catalytic Proton donor. Residues 101–102 and R111 contribute to the substrate site; that span reads IS.

The protein belongs to the type-II 3-dehydroquinase family. As to quaternary structure, homododecamer.

The enzyme catalyses 3-dehydroquinate = 3-dehydroshikimate + H2O. Its pathway is metabolic intermediate biosynthesis; chorismate biosynthesis; chorismate from D-erythrose 4-phosphate and phosphoenolpyruvate: step 3/7. Its function is as follows. Catalyzes a trans-dehydration via an enolate intermediate. The chain is 3-dehydroquinate dehydratase from Thermoanaerobacter pseudethanolicus (strain ATCC 33223 / 39E) (Clostridium thermohydrosulfuricum).